The primary structure comprises 322 residues: Replication factor C small subunit (322 aa).

46–53 (GSAGVGKT) contacts ATP.

It belongs to the activator 1 small subunits family. RfcS subfamily. Heteromultimer composed of small subunits (RfcS) and large subunits (RfcL).

Its function is as follows. Part of the RFC clamp loader complex which loads the PCNA sliding clamp onto DNA. The polypeptide is Replication factor C small subunit (Methanoregula boonei (strain DSM 21154 / JCM 14090 / 6A8)).